Reading from the N-terminus, the 222-residue chain is Tegument protein UL26 (222 aa).

This sequence belongs to the herpesviridae US22 family. In terms of assembly, interacts with UL25. Interacts with ISGylation machinery components ISG15, UBA7 and HERC5; these interactions inhibit global protein ISGylation. Post-translationally, ISGylated; ISGylation regulates UL26 stability and inhibits its activities to suppress NF-kappa-B signaling.

The protein localises to the virion tegument. It localises to the host nucleus. In terms of biological role, plays a role in the inhibition of host NF-kappa-B. This inhibition affects both the canonical and the non-canonical pathways. Blocks the induction of host IKK phosphorylation. May also influence the normal phosphorylation state of several tegument proteins including pp28 in virions. Also suppresses virus-induced ISGylation independent of its own ISGylation. This is Tegument protein UL26 (UL26) from Homo sapiens (Human).